The primary structure comprises 270 residues: Tryptophan synthase alpha chain (270 aa).

Residues Glu-49 and Asp-60 each act as proton acceptor in the active site.

It belongs to the TrpA family. In terms of assembly, tetramer of two alpha and two beta chains.

The enzyme catalyses (1S,2R)-1-C-(indol-3-yl)glycerol 3-phosphate + L-serine = D-glyceraldehyde 3-phosphate + L-tryptophan + H2O. The protein operates within amino-acid biosynthesis; L-tryptophan biosynthesis; L-tryptophan from chorismate: step 5/5. The alpha subunit is responsible for the aldol cleavage of indoleglycerol phosphate to indole and glyceraldehyde 3-phosphate. In Pseudomonas fluorescens (strain Pf0-1), this protein is Tryptophan synthase alpha chain.